The chain runs to 796 residues: RNA cytosine-C(5)-methyltransferase NSUN2 (796 aa).

Over residues Met-1–Gln-11 the composition is skewed to basic residues. The interval Met-1–Gly-36 is disordered. Gly residues predominate over residues Gly-22–Gly-36. S-adenosyl-L-methionine contacts are provided by residues Cys-184–Lys-190, Asp-215, Asp-242, and Asp-268. Cys-321 acts as the Nucleophile in catalysis. 2 disordered regions span residues Trp-435 to Pro-501 and Arg-707 to Asp-796. Composition is skewed to basic and acidic residues over residues Ala-467 to Gln-483, Lys-708 to Gln-721, and Val-733 to Ala-746. Polar residues predominate over residues Cys-774 to Asn-783. Over residues Gln-784–Asp-796 the composition is skewed to basic and acidic residues.

Belongs to the class I-like SAM-binding methyltransferase superfamily. RsmB/NOP family. TRM4 subfamily.

Its subcellular location is the nucleus. It is found in the nucleolus. The protein localises to the cytoplasm. The protein resides in the mitochondrion. It localises to the cytoskeleton. Its subcellular location is the spindle. It is found in the secreted. The protein localises to the extracellular exosome. It carries out the reaction cytidine(48) in tRNA + S-adenosyl-L-methionine = 5-methylcytidine(48) in tRNA + S-adenosyl-L-homocysteine + H(+). It catalyses the reaction cytidine(49) in tRNA + S-adenosyl-L-methionine = 5-methylcytidine(49) in tRNA + S-adenosyl-L-homocysteine + H(+). The enzyme catalyses cytidine(50) in tRNA + S-adenosyl-L-methionine = 5-methylcytidine(50) in tRNA + S-adenosyl-L-homocysteine + H(+). The catalysed reaction is cytidine(34) in tRNA precursor + S-adenosyl-L-methionine = 5-methylcytidine(34) in tRNA precursor + S-adenosyl-L-homocysteine + H(+). It carries out the reaction a cytidine in mRNA + S-adenosyl-L-methionine = a 5-methylcytidine in mRNA + S-adenosyl-L-homocysteine + H(+). In terms of biological role, RNA cytosine C(5)-methyltransferase that methylates cytosine to 5-methylcytosine (m5C) in various RNAs, such as tRNAs, mRNAs and some long non-coding RNAs (lncRNAs). Involved in various processes, such as epidermal stem cell differentiation, testis differentiation and maternal to zygotic transition during early development: acts by increasing protein synthesis; cytosine C(5)-methylation promoting tRNA stability and preventing mRNA decay. Methylates cytosine to 5-methylcytosine (m5C) at positions 34 and 48 of intron-containing tRNA(Leu)(CAA) precursors, and at positions 48, 49 and 50 of tRNA(Gly)(GCC) precursors. tRNA methylation is required generation of RNA fragments derived from tRNAs (tRFs). Also mediates C(5)-methylation of mitochondrial tRNAs. Catalyzes cytosine C(5)-methylation of mRNAs, leading to stabilize them and prevent mRNA decay. Cytosine C(5)-methylation of mRNAs also regulates mRNA export. Also mediates cytosine C(5)-methylation of non-coding RNAs, such as vault RNAs (vtRNAs), promoting their processing into regulatory small RNAs. Required for proper spindle assembly and chromosome segregation, independently of its methyltransferase activity. The protein is RNA cytosine-C(5)-methyltransferase NSUN2 of Gallus gallus (Chicken).